Consider the following 159-residue polypeptide: MEKLSEKDKELIRGSWESLGKNKVPHGVVMFSRLFELDPELLTLFHYTTNCGSTQDCLSSPEFLEHVTKVMLVIDAAVSHLDDLPSLEDFLLNLGRKHQAVGVNTQSFAEVGESLLYMLQCSLGQAYTAPLRQAWLNLYSIVVAAMSQGWAKNGEDKAD.

The Globin domain occupies 3 to 151 (KLSEKDKELI…VVAAMSQGWA (149 aa)). The heme b site is built by His66 and His98.

This sequence belongs to the globin family. As to quaternary structure, monomer. Homodimers and homotetramers. Mainly monomeric but also detected as part of homodimers and homotetramers.

The protein resides in the cytoplasm. Its subcellular location is the cytosol. The protein localises to the mitochondrion matrix. The enzyme catalyses Fe(III)-heme b-[protein] + nitric oxide + H2O = Fe(II)-heme b-[protein] + nitrite + 2 H(+). In terms of biological role, monomeric globin with a bis-histidyl six-coordinate heme-iron atom through which it can bind dioxygen, carbon monoxide and nitric oxide. Could help transport oxygen and increase its availability to the metabolically active neuronal tissues, though its low quantity in tissues as well as its high affinity for dioxygen, which may limit its oxygen-releasing ability, argue against it. The ferrous/deoxygenated form exhibits a nitrite reductase activity and it could produce nitric oxide which in turn inhibits cellular respiration in response to hypoxia. In its ferrous/deoxygenated state, it may also exhibit GDI (Guanine nucleotide Dissociation Inhibitor) activity toward heterotrimeric G-alpha proteins, thereby regulating signal transduction to facilitate neuroprotective responses in the wake of hypoxia and associated oxidative stress. In Chaenocephalus aceratus (Blackfin icefish), this protein is Neuroglobin (ngb).